A 267-amino-acid chain; its full sequence is tRNA-cytidine(32) 2-sulfurtransferase 1 (267 aa).

Residues 42–47 (SGGKDS) carry the PP-loop motif motif. [4Fe-4S] cluster-binding residues include cysteine 117, cysteine 120, and cysteine 208.

This sequence belongs to the TtcA family. As to quaternary structure, homodimer. It depends on Mg(2+) as a cofactor. [4Fe-4S] cluster is required as a cofactor.

Its subcellular location is the cytoplasm. The catalysed reaction is cytidine(32) in tRNA + S-sulfanyl-L-cysteinyl-[cysteine desulfurase] + AH2 + ATP = 2-thiocytidine(32) in tRNA + L-cysteinyl-[cysteine desulfurase] + A + AMP + diphosphate + H(+). Its pathway is tRNA modification. Its function is as follows. Catalyzes the ATP-dependent 2-thiolation of cytidine in position 32 of tRNA, to form 2-thiocytidine (s(2)C32). The sulfur atoms are provided by the cysteine/cysteine desulfurase (IscS) system. In Francisella tularensis subsp. tularensis (strain FSC 198), this protein is tRNA-cytidine(32) 2-sulfurtransferase 1.